The primary structure comprises 217 residues: Eukaryotic translation initiation factor 4E (217 aa).

Residues 1 to 30 (MATVEPETTPTPNPPTTEEEKTESNQEVAN) are disordered. N-acetylalanine is present on alanine 2. Threonine 22 bears the Phosphothreonine mark. Positions 37 to 40 (HPLQ) are EIF4EBP1/2/3 binding. 56-57 (WQ) serves as a coordination point for mRNA. The interval 73–77 (WALYN) is EIF4EBP1/2/3 binding. Residue 102–103 (WE) coordinates mRNA. Positions 132-139 (ETLLCLIG) are EIF4EBP1/2/3 binding. MRNA contacts are provided by residues 157 to 162 (RAKGDK) and 205 to 207 (TKS). Serine 209 is subject to Phosphoserine; by PKC and MKNK2.

It belongs to the eukaryotic initiation factor 4E family. As to quaternary structure, eIF4F is a multi-subunit complex, the composition of which varies with external and internal environmental conditions. It is composed of at least EIF4A, EIF4E and EIF4G1/EIF4G3. EIF4E is also known to interact with other partners. Interacts with EIF4ENIF1/4E-T; promotes recruitment to P-bodies and import into the nucleus. Hypophosphorylated EIF4EBP1, EIF4EBP2 and EIF4EBP3 compete with EIF4G1/EIF4G3 to interact with EIF4E; insulin stimulated MAP-kinase (MAPK1 and MAPK3) phosphorylation of EIF4EBP1 causes dissociation of the complex allowing EIF4G1/EIF4G3 to bind and consequent initiation of translation. Interacts mutually exclusive with EIF4A1 or EIF4A2. Interacts with NGDN and PIWIL2. Component of the CYFIP1-EIF4E-FMR1 complex composed of CYFIP, EIF4E and FMR1. Interacts directly with CYFIP1. Interacts with CLOCK. Binds to MKNK2 in nucleus. Interacts with LIMD1, WTIP and AJUBA. Interacts with APOBEC3G in an RNA-dependent manner. Interacts with LARP1. Interacts with METTL3. Interacts with RBM24; this interaction prevents EIF4E from binding to p53/TP53 mRNA and inhibits the assembly of translation initiation complex. Interacts with DDX3X; interaction is direct and in an RNA-independent manner; this interaction enhances EIF4E cap-binding ability and is required for the repression of cap-dependent translation and the increase of IRES-mediated translation. DDX3X competes with EIF4G1 for interaction with EIF4E. Interacts with EIF4G1; which in a mutual exclusive interaction associates either with EIF1 or with EIF4E on a common binding site. Interacts with BTG4 and CNOT7. Interacts with LRPPRC (via N-terminus); the interaction promotes association of EIF4E with 4ESE-containing mRNAs. Interacts with mRNA cleavage enzyme CPSF3 and its cofactor CPSF1. Interacts (via RING-type zinc finger) with PML; the interaction results in conformational changes of both interacting proteins and reduces EIF4E affinity for the 5' m7G cap of mRNA, thus reducing EIF4E-mediated mRNA nuclear export. Interacts with homeobox protein HHEX/PRH; the interaction inhibits EIF4E-mediated mRNA nuclear export. Interacts with homeobox protein HOXA9; the interaction positively regulates EIF4E-mediated mRNA nuclear export. Interacts with homeobox protein EMX2. In terms of assembly, (Microbial infection) Interacts with Lassa virus Z protein. (Microbial infection) Interacts with Lymphocytic choriomeningitis virus (LCMV) Z protein (via RING-type zinc finger); the interaction results in conformational changes of both interacting proteins and reduces EIF4E affinity for the m7G mRNA cap structure. As to quaternary structure, (Microbial infection) Interacts (via cap-binding region) with potato virus Y VPg; this interaction mediates the translation of the VPg-viral RNA conjugates and interferes with the cellular EIF4E-dependent mRNA export and translation. Phosphorylation increases the ability of the protein to bind to mRNA caps and to form the eIF4F complex. Phosphorylation also enhances its mRNA transport function. Phosphorylation at Ser-209 is not essential for protein synthesis.

Its subcellular location is the cytoplasm. The protein localises to the P-body. It localises to the stress granule. It is found in the nucleus. The protein resides in the nucleus speckle. Its subcellular location is the nuclear body. Its function is as follows. Acts in the cytoplasm to initiate and regulate protein synthesis and is required in the nucleus for export of a subset of mRNAs from the nucleus to the cytoplasm which promotes processes such as RNA capping, processing and splicing. Component of the protein complex eIF4F, which is involved in the recognition of the mRNA cap, ATP-dependent unwinding of 5'-terminal secondary structure and recruitment of mRNA to the ribosome. This protein recognizes and binds the 7-methylguanosine (m7G)-containing mRNA cap during an early step in the initiation of protein synthesis and facilitates ribosome binding by inducing the unwinding of the mRNAs secondary structures. Together with EIF4G1, antagonizes the scanning promoted by EIF1-EIF4G1 and is required for TISU translation, a process where the TISU element recognition makes scanning unnecessary. In addition to its role in translation initiation, also acts as a regulator of translation and stability in the cytoplasm. Component of the CYFIP1-EIF4E-FMR1 complex which binds to the mRNA cap and mediates translational repression: in the complex, EIF4E mediates the binding to the mRNA cap. Component of a multiprotein complex that sequesters and represses translation of proneurogenic factors during neurogenesis. In P-bodies, component of a complex that mediates the storage of translationally inactive mRNAs in the cytoplasm and prevents their degradation. May play an important role in spermatogenesis through translational regulation of stage-specific mRNAs during germ cell development. As well as its roles in translation, also involved in mRNA nucleocytoplasmic transport. Its role in mRNA export from the nucleus to the cytoplasm relies on its ability to bind the m7G cap of RNAs and on the presence of the 50-nucleotide EIF4E sensitivity element (4ESE) in the 3'UTR of sensitive transcripts. Interaction with the 4ESE is mediated by LRPPRC which binds simultaneously to both EIF4E and the 4ESE, thereby acting as a platform for assembly for the RNA export complex. EIF4E-dependent mRNA export is independent of ongoing protein or RNA synthesis and is also NFX1-independent but is XPO1-dependent with LRPPRC interacting with XPO1 to form an EIF4E-dependent mRNA export complex. Alters the composition of the cytoplasmic face of the nuclear pore to promote RNA export by reducing RANBP2 expression, relocalizing nucleoporin NUP214 and increasing expression of RANBP1 and RNA export factors DDX19 and GLE1. Promotes the nuclear export of cyclin CCND1 mRNA. Promotes the nuclear export of NOS2/iNOS mRNA. Promotes the nuclear export of MDM2 mRNA. Promotes the export of additional mRNAs, including others involved in the cell cycle. In the nucleus, binds to capped splice factor-encoding mRNAs and stimulates their nuclear export to enhance splice factor production by increasing their cytoplasmic availability to the translation machinery. May also regulate splicing through interaction with the spliceosome in an RNA and m7G cap-dependent manner. Also binds to some pre-mRNAs and may play a role in their recruitment to the spliceosome. Promotes steady-state capping of a subset of coding and non-coding RNAs by mediating nuclear export of capping machinery mRNAs including RNMT, RNGTT and RAMAC to enhance their translation. Stimulates mRNA 3'-end processing by promoting the expression of several core cleavage complex factors required for mRNA cleavage and polyadenylation, and may also have a direct effect through its interaction with the CPSF3 cleavage enzyme. Rescues cells from apoptosis by promoting activation of serine/threonine-protein kinase AKT1 through mRNA export of NBS1 which potentiates AKT1 phosphorylation and also through mRNA export of AKT1 effectors, allowing for increased production of these proteins. The protein is Eukaryotic translation initiation factor 4E of Homo sapiens (Human).